The following is an 896-amino-acid chain: Androgen receptor (896 aa).

A modulating region spans residues 1–534; the sequence is MEVQLGLGRV…PIDYYFPPQK (534 aa). Positions 1–563 are interaction with ZNF318; it reads MEVQLGLGRV…GSCKVFFKRA (563 aa). Disordered stretches follow at residues 35–152 and 178–218; these read QNPG…LSLL and LLQQ…YLGG. Low complexity predominate over residues 54 to 78; the sequence is LQQQQLQQQETSPRRQQQQQQQPSE. Serine 65 bears the Phosphoserine; by CDK9 mark. Serine 81 is modified (phosphoserine). The segment covering 178–189 has biased composition (low complexity); the sequence is LLQQQQQQQQQQ. Polar residues predominate over residues 190–199; the sequence is EAVSEGNSSG. Phosphotyrosine; by CSK is present on tyrosine 215. At serine 248 the chain carries Phosphoserine. Tyrosine 259 is modified (phosphotyrosine; by CSK and TNK2). Tyrosine 299, tyrosine 338, tyrosine 349, and tyrosine 354 each carry phosphotyrosine; by CSK. Position 355 is a phosphotyrosine; by CSK and TNK2 (tyrosine 355). A Glycyl lysine isopeptide (Lys-Gly) (interchain with G-Cter in SUMO) cross-link involves residue lysine 378. Tyrosine 385 is subject to Phosphotyrosine; by CSK. Lysine 497 is covalently cross-linked (Glycyl lysine isopeptide (Lys-Gly) (interchain with G-Cter in SUMO)). Tyrosine 511 and tyrosine 528 each carry phosphotyrosine; by CSK. The interval 528–895 is interaction with LPXN; sequence YYFPPQKTCL…GKVKPIYFHT (368 aa). A DNA-binding region (nuclear receptor) is located at residues 535-608; the sequence is TCLICGDEAS…AGMTLGARKL (74 aa). 2 consecutive NR C4-type zinc fingers follow at residues 536-556 and 572-596; these read CLIC…CGSC and CASR…LRKC. The interval 548–638 is interaction with HIPK3; sequence YGALTCGSCK…TEEPAQKLTV (91 aa). Residues 568 to 895 form an interaction with CCAR1 region; it reads QKYLCASRND…GKVKPIYFHT (328 aa). Residues 601–895 form an interaction with KAT7 region; the sequence is MTLGARKLKK…GKVKPIYFHT (295 aa). Serine 627 carries the phosphoserine; by STK4/MST1 modification. The NR LBD domain occupies 645–876; sequence ECQPIFLNVL…DFPEMMAEII (232 aa). 17beta-hydroxy-5alpha-androstan-3-one-binding residues include asparagine 682 and arginine 729. Residues lysine 822 and lysine 824 each participate in a glycyl lysine isopeptide (Lys-Gly) (interchain with G-Cter in ubiquitin) cross-link. Position 854 (threonine 854) interacts with 17beta-hydroxy-5alpha-androstan-3-one. Phosphotyrosine; by CSK is present on tyrosine 892.

It belongs to the nuclear hormone receptor family. NR3 subfamily. Binds DNA as a homodimer. Part of a ternary complex containing AR, EFCAB6/DJBP and PARK7. Interacts with HIPK3 and NR0B2 in the presence of androgen. The ligand binding domain interacts with KAT7/HBO1 in the presence of dihydrotestosterone. Interacts with EFCAB6/DJBP, PQBP1, RANBP9, RBAK, SPDEF, SRA1, TGFB1I1 and RREB1. Interacts with ZMIZ1/ZIMP10 and ZMIZ2/ZMIP7 which both enhance its transactivation activity. Interacts with SLC30A9 and RAD54L2/ARIP4. Interacts with MACROD1 (via macro domain). Interacts via the ligand-binding domain with LXXLL and FXXLF motifs from NCOA1, NCOA2, NCOA3 and MAGEA11. Interacts (via nuclear receptor DNA binding domain and nuclear receptor ligand binding domain) with NCOA4. The AR N-terminal poly-Gln region binds Ran resulting in enhancement of AR-mediated transactivation. Ran-binding decreases as the poly-Gln length increases. Interacts with HIP1 (via coiled coil domain). Interacts (via ligand-binding domain) with TRIM68. Interacts with TNK2. Interacts with USP26. Interacts with RNF6. Interacts (regulated by RNF6 probably through polyubiquitination) with RNF14; regulates AR transcriptional activity. Interacts with PRMT2 and TRIM24. Interacts with RACK1. Interacts with RANBP10; this interaction enhances dihydrotestosterone-induced AR transcriptional activity. Interacts with PRPF6 in a hormone-independent way; this interaction enhances dihydrotestosterone-induced AR transcriptional activity. Interacts with STK4/MST1. Interacts with ZIPK/DAPK3. Interacts with LPXN. Interacts with MAK. Part of a complex containing AR, MAK and NCOA3. Interacts with CRY1. Interacts with CCAR1 and GATA2. Interacts with ZNF318. Interacts with BUD31. Interacts with ARID4A. Interacts with ARID4B. Interacts (via NR LBD domain) with ZBTB7A; the interaction is direct and androgen-dependent. Interacts with NCOR1. Interacts with NCOR2. Interacts with CRY2 in a ligand-dependent manner. Post-translationally, phosphorylated in prostate cancer cells in response to several growth factors including EGF. Phosphorylation is induced by c-Src kinase (CSK). Tyr-511 is one of the major phosphorylation sites and an increase in phosphorylation and Src kinase activity is associated with prostate cancer progression. Phosphorylation by TNK2 enhances the DNA-binding and transcriptional activity. Phosphorylation at Ser-65 by CDK9 regulates AR promoter selectivity and cell growth. Sumoylated on Lys-378 (major) and Lys-497. Ubiquitinated. Deubiquitinated by USP26. 'Lys-6' and 'Lys-27'-linked polyubiquitination by RNF6 modulates AR transcriptional activity and specificity. In terms of processing, palmitoylated by ZDHHC7 and ZDHHC21. Palmitoylation is required for plasma membrane targeting and for rapid intracellular signaling via ERK and AKT kinases and cAMP generation.

The protein localises to the nucleus. The protein resides in the cytoplasm. Steroid hormone receptors are ligand-activated transcription factors that regulate eukaryotic gene expression and affect cellular proliferation and differentiation in target tissues. Transcription factor activity is modulated by bound coactivator and corepressor proteins like ZBTB7A that recruits NCOR1 and NCOR2 to the androgen response elements/ARE on target genes, negatively regulating androgen receptor signaling and androgen-induced cell proliferation. Transcription activation is also down-regulated by NR0B2. Activated, but not phosphorylated, by HIPK3 and ZIPK/DAPK3. This Sus scrofa (Pig) protein is Androgen receptor (AR).